Reading from the N-terminus, the 193-residue chain is Putative 3-methyladenine DNA glycosylase (193 aa).

The protein belongs to the DNA glycosylase MPG family.

This Agrobacterium fabrum (strain C58 / ATCC 33970) (Agrobacterium tumefaciens (strain C58)) protein is Putative 3-methyladenine DNA glycosylase.